Reading from the N-terminus, the 481-residue chain is Endonuclease Bax1 (481 aa).

The tract at residues 1–136 (MLPWELARFS…EKKIIKAPTI (136 aa)) is N-terminal domain (NTD). Positions 158-250 (YKLTVYVSSN…LKLANFKELK (93 aa)) are central domain (CRD). The nuclease domain (NUS) stretch occupies residues 260–364 (DSSVEEKFYK…YKRKIDISLV (105 aa)). Residues Glu265, Asp297, and Glu310 each contribute to the a divalent metal cation site. Positions 414–481 (PGYIFLKNYY…AIVIKDKKVN (68 aa)) are C-terminal domain (CTD).

This sequence belongs to the Bax1 family. Homodimer in solution, forms a heterodimer with XPB2. A divalent metal cation is required as a cofactor.

In terms of biological role, a dual DNA endonuclease probably involved in nucleotide excision repair (NER). The N-terminal nuclease domain (NTD) of the XPB2-Bax1 complex cleaves on one side of a DNA bubble (which presumably mimics DNA damage), while the NUS nuclease domain cleaves the other side, respectively called 5' and 3' nuclease activities. Interaction with XPB blocks the NTD nuclease activity. Binds to and stimulates the ATPase activity (and probably also helicase activity) of XPB2. Increases affinity of XPB2 for forked DNA. Does not stimulate the DNA-dependent activity of XPB1. In an XPB2-Bax1-bubble DNA crystal (12 bp of dsDNA, a 6 base bubble and 6 bp of dsDNA) the short 6 bp arm is unwound. The 2 helicase and the ThM domains of XPB2 with the NTD and CRD domains of Bax1 encircle the DNA, forming a tunnel where the 12 bp dsDNA and the ds-ssDNA junction are located. The ThM domain is wedged between the ssDNA tails, with the 5' ssDNA contacting Bax1 and the 3' ssDNA in a channel in XPB2. The nuclease domain (NUS) of Bax1 does not contact DNA in the bubble DNA complex. This Sulfurisphaera tokodaii (strain DSM 16993 / JCM 10545 / NBRC 100140 / 7) (Sulfolobus tokodaii) protein is Endonuclease Bax1.